The following is a 763-amino-acid chain: Protein translocase subunit SecA 2 (763 aa).

ATP-binding positions include Gln-83, 101-105 (GEGKT), and Asp-490.

It belongs to the SecA family. Monomer and homodimer. Part of the essential Sec protein translocation apparatus which comprises SecA, SecYEG and auxiliary proteins SecDF. Other proteins may also be involved.

It is found in the cell membrane. It localises to the cytoplasm. The enzyme catalyses ATP + H2O + cellular proteinSide 1 = ADP + phosphate + cellular proteinSide 2.. Functionally, part of the Sec protein translocase complex. Interacts with the SecYEG preprotein conducting channel. Has a central role in coupling the hydrolysis of ATP to the transfer of proteins into and across the cell membrane, serving as an ATP-driven molecular motor driving the stepwise translocation of polypeptide chains across the membrane. This chain is Protein translocase subunit SecA 2, found in Corynebacterium glutamicum (strain R).